Consider the following 78-residue polypeptide: RNA-binding protein Hfq (78 aa).

Residues 10 to 69 (DPFLNALRKEHVPVSIYLVNGIKLQGHIESFDQYVVLLRNTVTQMVYKHAISTVVPARAV) enclose the Sm domain.

The protein belongs to the Hfq family. In terms of assembly, homohexamer.

Its function is as follows. RNA chaperone that binds small regulatory RNA (sRNAs) and mRNAs to facilitate mRNA translational regulation in response to envelope stress, environmental stress and changes in metabolite concentrations. Also binds with high specificity to tRNAs. This chain is RNA-binding protein Hfq, found in Herminiimonas arsenicoxydans.